We begin with the raw amino-acid sequence, 309 residues long: Probable pathogenesis-related protein ARB_02861 (309 aa).

Positions 1-17 are cleaved as a signal peptide; the sequence is MKSSVLMTALCVAGSLA. Residues 47-59 are compositionally biased toward low complexity; it reads CPTVIPTTSYKPE. Residues 47 to 152 are disordered; it reads CPTVIPTTSY…PPPPGKDYKE (106 aa). Pro residues-rich tracts occupy residues 61–92 and 99–147; these read TSKP…PCPE and APPP…PPPG. The SCP domain maps to 154–284; it reads AGYHHNVHRS…GDAYYTVCNY (131 aa). The N-linked (GlcNAc...) asparagine glycan is linked to Asn164.

Belongs to the CRISP family.

It is found in the secreted. Secreted protein required for efficient export of lipids such as acetylated sterols. Acts in detoxification of hydrophobic compounds. The chain is Probable pathogenesis-related protein ARB_02861 from Arthroderma benhamiae (strain ATCC MYA-4681 / CBS 112371) (Trichophyton mentagrophytes).